The chain runs to 190 residues: Ribonuclease HII (190 aa).

The 188-residue stretch at 3 to 190 folds into the RNase H type-2 domain; it reads KLIAGVDEVG…KPVKALLEEK (188 aa). Residues D9, E10, and D101 each contribute to the a divalent metal cation site.

It belongs to the RNase HII family. Mn(2+) is required as a cofactor. It depends on Mg(2+) as a cofactor.

The protein resides in the cytoplasm. It catalyses the reaction Endonucleolytic cleavage to 5'-phosphomonoester.. In terms of biological role, endonuclease that specifically degrades the RNA of RNA-DNA hybrids. The polypeptide is Ribonuclease HII (Alteromonas mediterranea (strain DSM 17117 / CIP 110805 / LMG 28347 / Deep ecotype)).